The primary structure comprises 101 residues: Putative pterin-4-alpha-carbinolamine dehydratase (101 aa).

This sequence belongs to the pterin-4-alpha-carbinolamine dehydratase family.

It carries out the reaction (4aS,6R)-4a-hydroxy-L-erythro-5,6,7,8-tetrahydrobiopterin = (6R)-L-erythro-6,7-dihydrobiopterin + H2O. This chain is Putative pterin-4-alpha-carbinolamine dehydratase, found in Rhodopseudomonas palustris (strain BisA53).